The sequence spans 716 residues: Iron-sulfur clusters transporter atm1, mitochondrial (716 aa).

A mitochondrion-targeting transit peptide spans 1–18 (MAPSIKLSTMATSLHRAH). Residues 19 to 123 (GTSALLRRPR…PKGSWGDKAR (105 aa)) are Mitochondrial matrix-facing. The disordered stretch occupies residues 57–87 (LFAPNGSAKDESKPAVSTVPKTTGRGPSDPL). A helical transmembrane segment spans residues 124-145 (VLLAIGLLVGGKVLNVQVPFYF). The region spanning 124 to 414 (VLLAIGLLVG…LGSVYRELRQ (291 aa)) is the ABC transmembrane type-1 domain. At 146-168 (REIVDSLNIDFSTTGGSVTAVAG) the chain is on the mitochondrial intermembrane side. Residues 169-192 (AMILGYGAARVGAVVSQELRNAVF) form a helical membrane-spanning segment. At 193-241 (ASVAQKAIRKVARNTFEHLLNLDLSFHLSKQTGGLTRAIDRGTKGISFL) the chain is on the mitochondrial matrix side. Residues 242–265 (LTSMVFHIVPTALEISMVCGILTY) form a helical membrane-spanning segment. Residue Asn-266 is a topological domain, mitochondrial intermembrane. A helical transmembrane segment spans residues 267 to 287 (FGWQYAALTALTMVSYTAFTI). The Mitochondrial matrix segment spans residues 288-353 (LTTAWRTKFR…NSIKVATSLA (66 aa)). Glutathione contacts are provided by residues 293–297 (RTKFR) and 356–359 (NSGQ). The chain crosses the membrane as a helical span at residues 354–372 (FLNSGQNIIFSSALTVMMY). Topologically, residues 373 to 387 (MGAHGVATGQLTVGD) are mitochondrial intermembrane. Residues 388–409 (LVLINQLVFQLSVPLNFLGSVY) form a helical membrane-spanning segment. Gly-406 lines the glutathione pocket. Residues 410-716 (RELRQSLLDM…KEEVGEKKEA (307 aa)) are Mitochondrial matrix-facing. In terms of domain architecture, ABC transporter spans 449–690 (IEFKDVTFGY…NGVYAQLWRA (242 aa)). ATP is bound by residues Tyr-458 and 482–493 (GPSGCGKSTLLR). The segment at 697-716 (EEGEVSKKGEKEEVGEKKEA) is disordered. The span at 700–716 (EVSKKGEKEEVGEKKEA) shows a compositional bias: basic and acidic residues.

This sequence belongs to the ABC transporter superfamily. ABCB family. Heavy Metal importer (TC 3.A.1.210) subfamily. As to quaternary structure, homodimer.

It localises to the mitochondrion inner membrane. Performs an essential function in the generation of cytoplasmic iron-sulfur proteins by mediating the ATP-dependent export of Fe/S cluster precursors synthesized by egt-3 and other mitochondrial proteins. Hydrolyzes ATP. Binds glutathione and may function by transporting a glutathione-conjugated iron-sulfur compound. The protein is Iron-sulfur clusters transporter atm1, mitochondrial of Neurospora crassa (strain ATCC 24698 / 74-OR23-1A / CBS 708.71 / DSM 1257 / FGSC 987).